Here is a 328-residue protein sequence, read N- to C-terminus: Sin3 histone deacetylase corepressor complex component SDS3 (328 aa).

The tract at residues methionine 1–aspartate 64 is disordered. Serine 2 carries the post-translational modification N-acetylserine. The interval serine 2–leucine 170 is mediates interaction with USP17L2. The segment covering alanine 10–glutamate 21 has biased composition (pro residues). Acidic residues-rich tracts occupy residues tyrosine 23 to glutamate 37 and serine 45 to glutamate 54. Phosphoserine is present on residues serine 32 and serine 45. Threonine 49 is modified (phosphothreonine). Phosphoserine is present on serine 53. Residues aspartate 64 to threonine 171 adopt a coiled-coil conformation. Glycyl lysine isopeptide (Lys-Gly) (interchain with G-Cter in SUMO2) cross-links involve residues lysine 69, lysine 178, and lysine 201. The segment at leucine 226–arginine 252 is disordered. Phosphoserine occurs at positions 228, 234, and 237. Position 244 is a phosphothreonine (threonine 244).

It belongs to the SDS3 family. As to quaternary structure, homodimer. Component of the SIN3 histone deacetylase (HDAC) corepressor complex. Interacts with SIN3A. Interaction with SIN3B enhances the interaction between SIN3B and HDAC1 to form a complex. Interacts with HCFC1. Component of a mSin3A corepressor complex that contains SIN3A, SAP130, SUDS3/SAP45, ARID4B/SAP180, HDAC1 and HDAC2. Interacts with USP17L2; the interaction is direct. Interacts with FOXK2. Polyubiquitinated. 'Lys-63'-polyubiquitinated SUDS3 positively regulates histone deacetylation. Regulated through deubiquitination by USP17L2/USP17 that cleaves 'Lys-63'-linked ubiquitin chains.

Its subcellular location is the nucleus. Functionally, regulatory protein which represses transcription and augments histone deacetylase activity of HDAC1. May have a potential role in tumor suppressor pathways through regulation of apoptosis. May function in the assembly and/or enzymatic activity of the mSin3A corepressor complex or in mediating interactions between the complex and other regulatory complexes. The chain is Sin3 histone deacetylase corepressor complex component SDS3 (SUDS3) from Bos taurus (Bovine).